A 332-amino-acid chain; its full sequence is Probable xyloglucan endotransglucosylase/hydrolase protein 28 (332 aa).

The signal sequence occupies residues 1–22 (MGFITRFLVFMSLFTSLVSGFA). Positions 23–223 (LQKLPLIQFD…YKYAPYVSQF (201 aa)) constitute a GH16 domain. Glu108 functions as the Nucleophile in the catalytic mechanism. The active-site Proton donor is Glu112. Xyloglucan is bound by residues Glu112 and 125-127 (QTN). Asn131 carries an N-linked (GlcNAc...) asparagine glycan. Xyloglucan contacts are provided by residues 135-139 (HLGRE), 202-203 (KW), Gly207, and Arg282. A disulfide bond links Cys277 and Cys290. Positions 313–326 (HGHRRGKHRSRSRL) are enriched in basic residues. The tract at residues 313–332 (HGHRRGKHRSRSRLARTESI) is disordered.

This sequence belongs to the glycosyl hydrolase 16 family. XTH group 3 subfamily. Contains at least one intrachain disulfide bond essential for its enzymatic activity. Expressed in 7 day old seedlings, roots, rosette leaves, internodes between nodes bearing axillary shoots, nodes bearing flowers, flower buds and siliques.

It localises to the secreted. Its subcellular location is the cell wall. It is found in the extracellular space. The protein resides in the apoplast. The catalysed reaction is breaks a beta-(1-&gt;4) bond in the backbone of a xyloglucan and transfers the xyloglucanyl segment on to O-4 of the non-reducing terminal glucose residue of an acceptor, which can be a xyloglucan or an oligosaccharide of xyloglucan.. Catalyzes xyloglucan endohydrolysis (XEH) and/or endotransglycosylation (XET). Cleaves and religates xyloglucan polymers, an essential constituent of the primary cell wall, and thereby participates in cell wall construction of growing tissues. This chain is Probable xyloglucan endotransglucosylase/hydrolase protein 28 (XTH28), found in Arabidopsis thaliana (Mouse-ear cress).